We begin with the raw amino-acid sequence, 456 residues long: Protein shifted (456 aa).

Residues 1 to 30 form the signal peptide; it reads MTHQGIGCLVKWLYLVLIVHTLLCIGQLEC. Residues 34–112 are disordered; sequence HHNRNNNNNN…GGGGSRHNRN (79 aa). Residues 44-55 are compositionally biased toward basic and acidic residues; the sequence is RRADSSSSEEGH. An N-linked (GlcNAc...) asparagine glycan is attached at N57. Residues 77 to 87 are compositionally biased toward basic residues; that stretch reads HQPRRGQRKKQ. Residues 88 to 107 show a composition bias toward gly residues; it reads QGGGGGGSGGGGGNGGGGGS. Residues 119–261 form the WIF domain; sequence LWINEQQLKM…PIRLNFKKEC (143 aa). N-linked (GlcNAc...) asparagine glycosylation is found at N173, N217, and N227. Disulfide bonds link C224/C261, C283/C293, C287/C299, C301/C310, C315/C325, C319/C331, C333/C342, C347/C357, C351/C363, C365/C374, C379/C389, C383/C395, C397/C406, C416/C423, C418/C429, and C431/C440. 5 EGF-like domains span residues 279–311, 315–342, 343–375, 376–407, and 412–441; these read TLQE…QYCE, CFPQ…GTQC, EGGI…LRCE, YSKC…DHCE, and QRSI…RHCN. N324 carries N-linked (GlcNAc...) asparagine glycosylation. N420 is a glycosylation site (N-linked (GlcNAc...) asparagine).

Interacts with hh. As to expression, at the blastoderm stage, it is ubiquitously expressed. As embryogenesis continues, it is expressed in the epidermis and central nervous system, this expression being segmentally modulated. Also highly expressed at the foregut and hindgut throughout embryogenesis. In third instar wing imaginal disks, it is highly expressed in the most anterior and posterior parts of the disk and weakly expressed at the antero/posterior (A/P) compartment border. In the leg disks and the antenna part of the eye-antennal imaginal disk it is also weakly expressed at the A/P compartment border. Weakly expressed in the morphogenetic furrow in the eye primordium.

Its subcellular location is the secreted. The protein resides in the extracellular space. The protein localises to the extracellular matrix. Its function is as follows. Required for normal accumulation and movement of lipid-modified hedgehog (hh) morphogen. May act by stabilizing the interaction between heparan sulfate proteoglycans (HSPGs) and hh, HSPGs being required for diffusion of hh morphogen. Not involved in wingless (wg) morphogen movement, suggesting that it may provide HSPG specificity for Hh. This Drosophila melanogaster (Fruit fly) protein is Protein shifted (shf).